Consider the following 143-residue polypeptide: MAIERTFSIIKPDAVAKNHIGAIYNRFETAGLKIVAAKMLHLTKEQAEGFYAEHSERGFFGALVAFMTSGPIMVQVLEGENAVLAHREILGATNPAQAAPGTIRADFAESIDENAAHGSDALESAAREIAYFFSAEELCPRTR.

Lysine 11, phenylalanine 59, arginine 87, threonine 93, arginine 104, and asparagine 114 together coordinate ATP. Histidine 117 functions as the Pros-phosphohistidine intermediate in the catalytic mechanism.

This sequence belongs to the NDK family. Homotetramer. The cofactor is Mg(2+).

Its subcellular location is the cytoplasm. The catalysed reaction is a 2'-deoxyribonucleoside 5'-diphosphate + ATP = a 2'-deoxyribonucleoside 5'-triphosphate + ADP. The enzyme catalyses a ribonucleoside 5'-diphosphate + ATP = a ribonucleoside 5'-triphosphate + ADP. Its function is as follows. Major role in the synthesis of nucleoside triphosphates other than ATP. The ATP gamma phosphate is transferred to the NDP beta phosphate via a ping-pong mechanism, using a phosphorylated active-site intermediate. This is Nucleoside diphosphate kinase from Shewanella sp. (strain ANA-3).